The following is a 233-amino-acid chain: MLTAKQHELIRFIQQRLEETGISPSFEEMKEALDLKSKSGVHRLISALEERGFIRRLPNRARALEILKQPEDVVGGGAKAAQSGSEASNVVDIRTAQAKTVPAPINDVVEIPLHGRIAAGAPIEALEDHQSLPVPAALLGPGDHYALEVSGDSMIEAGIFDGDFALIRRTDSARDGEIVVALVNNEEATLKYLHRDSGRVRLDPANASYEAQVYDPHQVQVQGKLAGLLRRYH.

Residues 26 to 46 (FEEMKEALDLKSKSGVHRLIS) constitute a DNA-binding region (H-T-H motif). Catalysis depends on for autocatalytic cleavage activity residues serine 153 and lysine 191.

This sequence belongs to the peptidase S24 family. As to quaternary structure, homodimer.

It catalyses the reaction Hydrolysis of Ala-|-Gly bond in repressor LexA.. In terms of biological role, represses a number of genes involved in the response to DNA damage (SOS response), including recA and lexA. In the presence of single-stranded DNA, RecA interacts with LexA causing an autocatalytic cleavage which disrupts the DNA-binding part of LexA, leading to derepression of the SOS regulon and eventually DNA repair. The protein is LexA repressor of Erythrobacter litoralis (strain HTCC2594).